The chain runs to 516 residues: Extracellular endo-inulinase inuA (516 aa).

The first 25 residues, 1-25 (MLNPKVAYMVWMTCLGLMLPSQAQS), serve as a signal peptide directing secretion. Substrate-binding positions include 40–43 (WMNE), Q59, W67, and 99–100 (FT). The active site involves E43. N-linked (GlcNAc...) asparagine glycosylation is present at N109. Residue 175–176 (RD) coordinates substrate. N210 is a glycosylation site (N-linked (GlcNAc...) asparagine). Residue E233 participates in substrate binding. Residues N372 and N419 are each glycosylated (N-linked (GlcNAc...) asparagine).

The protein belongs to the glycosyl hydrolase 32 family.

It localises to the secreted. The catalysed reaction is Endohydrolysis of (2-&gt;1)-beta-D-fructosidic linkages in inulin.. With respect to regulation, activity is stimulated by Mn(2+), Fe(2+) Ca(2+) metal ions and DTT; and inhibited by glucose, Mg(2+), Zn(2+), Cu(2+), Hg(2+), Al(3+), and Fe(3+). Functionally, endo-inulinase involved in utilization of the plant storage polymer inulin, consisting of fructooligosaccharides with a degree of polymerization (DP) value from 2 to 60. This chain is Extracellular endo-inulinase inuA (inuA), found in Aspergillus niger.